We begin with the raw amino-acid sequence, 541 residues long: Arginine--tRNA ligase (541 aa).

The 'HIGH' region motif lies at 119-129 (ANPTGPLHIGH).

It belongs to the class-I aminoacyl-tRNA synthetase family. In terms of assembly, monomer.

The protein localises to the cytoplasm. The enzyme catalyses tRNA(Arg) + L-arginine + ATP = L-arginyl-tRNA(Arg) + AMP + diphosphate. The chain is Arginine--tRNA ligase (argS) from Helicobacter pylori (strain ATCC 700392 / 26695) (Campylobacter pylori).